The primary structure comprises 90 residues: Putative membrane protein insertion efficiency factor (90 aa).

Belongs to the UPF0161 family.

It is found in the cell inner membrane. Could be involved in insertion of integral membrane proteins into the membrane. This chain is Putative membrane protein insertion efficiency factor, found in Bordetella bronchiseptica (strain ATCC BAA-588 / NCTC 13252 / RB50) (Alcaligenes bronchisepticus).